Consider the following 229-residue polypeptide: Cytidylate kinase (229 aa).

12–20 (GPSGAGKGT) contributes to the ATP binding site.

This sequence belongs to the cytidylate kinase family. Type 1 subfamily.

It localises to the cytoplasm. The enzyme catalyses CMP + ATP = CDP + ADP. It catalyses the reaction dCMP + ATP = dCDP + ADP. The polypeptide is Cytidylate kinase (Shewanella frigidimarina (strain NCIMB 400)).